The following is a 314-amino-acid chain: tRNA selenocysteine 1-associated protein 1 (314 aa).

2 consecutive RRM domains span residues 2 to 85 (NSLW…RSNY) and 94 to 173 (FSLF…LASS).

The protein belongs to the RRM TRSPAP family.

It localises to the nucleus. The protein localises to the cytoplasm. Functionally, involved in the early steps of selenocysteine biosynthesis and tRNA(Sec) charging to the later steps resulting in the cotranslational incorporation of selenocysteine into selenoproteins. The polypeptide is tRNA selenocysteine 1-associated protein 1 (Danio rerio (Zebrafish)).